A 76-amino-acid chain; its full sequence is Repressor protein of division inhibition gene dicB (76 aa).

A DNA-binding region spans residues 13 to 33 (KTKLAQAAGIRLASLYSWKGD).

Functionally, this protein is a repressor of division inhibition gene dicB. In Escherichia coli (strain K12), this protein is Repressor protein of division inhibition gene dicB (dicC).